We begin with the raw amino-acid sequence, 295 residues long: Aspartate carbamoyltransferase catalytic subunit (295 aa).

Residues arginine 49 and threonine 50 each coordinate carbamoyl phosphate. Lysine 77 provides a ligand contact to L-aspartate. Residues arginine 99, histidine 127, and glutamine 130 each coordinate carbamoyl phosphate. Residues arginine 161 and arginine 212 each contribute to the L-aspartate site. 2 residues coordinate carbamoyl phosphate: glycine 251 and proline 252.

The protein belongs to the aspartate/ornithine carbamoyltransferase superfamily. ATCase family. In terms of assembly, heterododecamer (2C3:3R2) of six catalytic PyrB chains organized as two trimers (C3), and six regulatory PyrI chains organized as three dimers (R2).

It carries out the reaction carbamoyl phosphate + L-aspartate = N-carbamoyl-L-aspartate + phosphate + H(+). It participates in pyrimidine metabolism; UMP biosynthesis via de novo pathway; (S)-dihydroorotate from bicarbonate: step 2/3. Its function is as follows. Catalyzes the condensation of carbamoyl phosphate and aspartate to form carbamoyl aspartate and inorganic phosphate, the committed step in the de novo pyrimidine nucleotide biosynthesis pathway. The sequence is that of Aspartate carbamoyltransferase catalytic subunit from Aliarcobacter butzleri (strain RM4018) (Arcobacter butzleri).